Consider the following 113-residue polypeptide: Large ribosomal subunit protein bL19 (113 aa).

The protein belongs to the bacterial ribosomal protein bL19 family.

Its function is as follows. This protein is located at the 30S-50S ribosomal subunit interface and may play a role in the structure and function of the aminoacyl-tRNA binding site. The polypeptide is Large ribosomal subunit protein bL19 (Natranaerobius thermophilus (strain ATCC BAA-1301 / DSM 18059 / JW/NM-WN-LF)).